Consider the following 271-residue polypeptide: Protein ABHD14A (271 aa).

A helical; Signal-anchor for type II membrane protein transmembrane segment spans residues 35–55 (VALLGLSLLLMLLLYVGLPGP). The N-linked (GlcNAc...) asparagine glycan is linked to asparagine 67. Serine 171 (charge relay system) is an active-site residue. Asparagine 201 carries N-linked (GlcNAc...) asparagine glycosylation. Active-site charge relay system residues include aspartate 222 and histidine 249.

The protein belongs to the AB hydrolase superfamily. ABHD14 family.

The protein localises to the cytoplasm. It localises to the membrane. Its function is as follows. Possible role in granule neuron development. The protein is Protein ABHD14A of Homo sapiens (Human).